Reading from the N-terminus, the 114-residue chain is Putative antiporter subunit mnhC2 (114 aa).

The next 3 helical transmembrane spans lie at 3 to 23 (LILLLVIGFLVFIGTYMILSI), 25 to 45 (LIRIVIGISIYTHAGNLIIMS), and 72 to 92 (AIVLTAIVIGFGMTAFLLVLI).

It belongs to the CPA3 antiporters (TC 2.A.63) subunit C family. In terms of assembly, may form a heterooligomeric complex that consists of seven subunits: mnhA2, mnhB2, mnhC2, mnhD2, mnhE2, mnhF2 and mnhG2.

The protein resides in the cell membrane. This Staphylococcus epidermidis (strain ATCC 12228 / FDA PCI 1200) protein is Putative antiporter subunit mnhC2 (mnhC2).